The following is a 233-amino-acid chain: Small ribosomal subunit protein uS2 (233 aa).

Belongs to the universal ribosomal protein uS2 family.

In Clostridium novyi (strain NT), this protein is Small ribosomal subunit protein uS2.